Here is a 308-residue protein sequence, read N- to C-terminus: uncharacterized protein (308 aa).

A helical transmembrane segment spans residues 191-211; it reads YLCLNLPYIIVALTLVPYSLV.

It is found in the host membrane. This is an uncharacterized protein from Saccharolobus islandicus (Sulfolobus islandicus).